The primary structure comprises 233 residues: Protein lin-7 homolog A (233 aa).

Residues 25-80 (LDRDVARAIELLEKLQESGEVPVHKLQSLKKVLQSEFCTAIREVYQYMHETITVNG) form the L27 domain. Residues 108-190 (VVELPKTDEG…SVKLVVRYTP (83 aa)) enclose the PDZ domain.

The protein belongs to the lin-7 family. As to quaternary structure, forms a complex with CASK and CASKIN1. Component of the brain-specific heterotrimeric complex (LIN-10-LIN-2-LIN-7 complex) composed of at least APBA1, CASK, and LIN7, which associates with the motor protein KIF17 to transport vesicles along microtubules. Can also interact with other modular proteins containing protein-protein interaction domains like PALS1, PALS2, MPP7, DLG1, DLG2 and DLG3 through its L27 domain. Interacts with DLG4, GRIN2B and MARCHF11 as well as CDH1 and CTNNB1, the channels KCNJ12/Kir2.2, KCNJ4/Kir2.3 and probably KCNJ2/Kir2.1 and SLC6A12/BGT-1 via its PDZ domain. The association of LIN7A with cadherin and beta-catenin is calcium-dependent, occurs at synaptic junctions and requires the actin cytoskeleton. Interacts with EGFR, ERBB2, ERBB3 and ERBB4 with both PDZ and KID domains. Associates with KIF17 via APBA1. Interacts with HTR4. Forms a tripartite complex composed of DLG1, MPP7 and LIN7 (LIN7A or LIN7C).

Its subcellular location is the cell membrane. It is found in the basolateral cell membrane. It localises to the cell junction. The protein localises to the postsynaptic density membrane. The protein resides in the tight junction. Functionally, plays a role in establishing and maintaining the asymmetric distribution of channels and receptors at the plasma membrane of polarized cells. Forms membrane-associated multiprotein complexes that may regulate delivery and recycling of proteins to the correct membrane domains. The tripartite complex composed of LIN7 (LIN7A, LIN7B or LIN7C), CASK and APBA1 associates with the motor protein KIF17 to transport vesicles containing N-methyl-D-aspartate (NMDA) receptor subunit NR2B along microtubules. This complex may have the potential to couple synaptic vesicle exocytosis to cell adhesion in brain. Ensures the proper localization of GRIN2B (subunit 2B of the NMDA receptor) to neuronal postsynaptic density and may function in localizing synaptic vesicles at synapses where it is recruited by beta-catenin and cadherin. Required to localize Kir2 channels, GABA transporter (SLC6A12) and EGFR/ERBB1, ERBB2, ERBB3 and ERBB4 to the basolateral membrane of epithelial cells. The polypeptide is Protein lin-7 homolog A (LIN7A) (Bos taurus (Bovine)).